The chain runs to 387 residues: 1-hydroxy-2-naphthoate 1,2-dioxygenasee (387 aa).

Cupin type-2 domains are found at residues 103–171 (FQLV…VWLD) and 271–337 (VQRL…VLLF).

Homohexamer. Requires Fe(2+) as cofactor.

It catalyses the reaction 1-hydroxy-2-naphthoate + O2 = (3Z)-4-(2-carboxyphenyl)-2-oxobut-3-enoate + H(+). In terms of biological role, dioxygenase involved in phenanthrene catabolism by mediating cleavage of 1-hydroxy-2-naphthoate. The protein is 1-hydroxy-2-naphthoate 1,2-dioxygenasee (phdI) of Nocardioides sp. (strain KP7).